The sequence spans 66 residues: Putative ankyrin repeat protein RF_pd14 (66 aa).

The stretch at 14 to 66 (KLNQKLMRAAATGDIEAVQKLVLRGADIYCRDHQGDTALSLAAGSGYLDILDI) is one ANK repeat.

The chain is Putative ankyrin repeat protein RF_pd14 from Rickettsia felis (strain ATCC VR-1525 / URRWXCal2) (Rickettsia azadi).